Reading from the N-terminus, the 420-residue chain is Protein PEA2 (420 aa).

Residues 132–153 (LTKENNNSFPNSKRARSSTNMG) show a composition bias toward polar residues. The segment at 132 to 169 (LTKENNNSFPNSKRARSSTNMGGTDKFNKGAYHTDKAD) is disordered. Residues 157 to 169 (KFNKGAYHTDKAD) show a composition bias toward basic and acidic residues. At S230 the chain carries Phosphoserine. Residues 323 to 363 (NSSRHNFGMSSPASSPVTWDPSSPSSVGSPTSGSGSRSLSI) are disordered. Positions 325–339 (SRHNFGMSSPASSPV) are enriched in polar residues. The segment covering 343–362 (PSSPSSVGSPTSGSGSRSLS) has biased composition (low complexity).

Functionally, localized to sites of polarized growth and is required for efficient mating and bipolar budding. This is Protein PEA2 (PEA2) from Saccharomyces cerevisiae (strain ATCC 204508 / S288c) (Baker's yeast).